Reading from the N-terminus, the 235-residue chain is Lipoprotein-releasing system ATP-binding protein LolD (235 aa).

One can recognise an ABC transporter domain in the interval 13–235; it reads LCCSNIIKRY…SNGMLKISTI (223 aa). An ATP-binding site is contributed by 49 to 56; it reads GASGSGKS.

It belongs to the ABC transporter superfamily. Lipoprotein translocase (TC 3.A.1.125) family. In terms of assembly, the complex is composed of two ATP-binding proteins (LolD) and two transmembrane proteins (LolC and LolE).

The protein resides in the cell inner membrane. In terms of biological role, part of the ABC transporter complex LolCDE involved in the translocation of mature outer membrane-directed lipoproteins, from the inner membrane to the periplasmic chaperone, LolA. Responsible for the formation of the LolA-lipoprotein complex in an ATP-dependent manner. This Blochmanniella floridana protein is Lipoprotein-releasing system ATP-binding protein LolD.